Reading from the N-terminus, the 660-residue chain is MKTVVFAYHDMGCLGIEALLAAGYEISAIFTHTDNPGEKAFYGSVARLAAERGIPVYAPDDVNHPLWVERIAQLSPDVIFSFYYRHLICDEILQLAPAGAFNLHGSLLTKYRGRAPLNWVLVNGETETGVTLHRMVTRADAGAIVAQLRVAIAPDDIAITLHHKLCHAARQLLEQTLPAIKHGNILEIAQRENEATCFGRRTPDDSFLEWHKPASVLHNMVRAVADPWPGAFSYVGNQKFTVWSSRVHPHASKAQPGSVISVAPLLIACGDGALEIVTGQASDGITMQGSQLAQTLGLVQGSRLNSQPACAARRRTRVLILGVNGFIGNHLTERLLREDHYEVYGLDIGSDAISRFLNHPHFHFVEGDISIHSEWIEYHVKKCDVVLPLVAIATPIEYTRNPLRVFELDFEENLRIIRYCVKYRKRIIFPSTSEVYGMCSDKYFDEDHSNLIVGPVNKPRWIYSVSKQLLDRVIWAYGEKEGLQFTLFRPFNWMGPRLDNLNAARIGSSRAITQLILNLVEGSPIKLIDGGKQKRCFTDIRDGIEALYRIIENAGNRCDGEIINIGNPENEASIEELGEMLLASFEKHPLRHHFPPFAGFRVVESSSYYGKGYQDVEHRKPSIRNAHRCLDWEPKIDMQETIDETLDFFLRTVDLTDKPS.

The tract at residues 1 to 304 (MKTVVFAYHD…TLGLVQGSRL (304 aa)) is formyltransferase ArnAFT. Residue 86–88 (HLI) coordinates (6R)-10-formyltetrahydrofolate. Histidine 104 acts as the Proton donor; for formyltransferase activity in catalysis. (6R)-10-formyltetrahydrofolate-binding positions include arginine 114 and 136–140 (VTRAD). The tract at residues 314 to 660 (RRTRVLILGV…RTVDLTDKPS (347 aa)) is dehydrogenase ArnADH. NAD(+) contacts are provided by residues aspartate 347 and 368 to 369 (DI). Residues alanine 393, tyrosine 398, and 432–433 (TS) each bind UDP-alpha-D-glucuronate. Glutamate 434 serves as the catalytic Proton acceptor; for decarboxylase activity. Residues arginine 460, asparagine 492, 526 to 535 (KLIDGGKQKR), and tyrosine 613 each bind UDP-alpha-D-glucuronate. The active-site Proton donor; for decarboxylase activity is the arginine 619.

The protein in the N-terminal section; belongs to the Fmt family. UDP-L-Ara4N formyltransferase subfamily. In the C-terminal section; belongs to the NAD(P)-dependent epimerase/dehydratase family. UDP-glucuronic acid decarboxylase subfamily. In terms of assembly, homohexamer, formed by a dimer of trimers.

The catalysed reaction is UDP-alpha-D-glucuronate + NAD(+) = UDP-beta-L-threo-pentopyranos-4-ulose + CO2 + NADH. It carries out the reaction UDP-4-amino-4-deoxy-beta-L-arabinose + (6R)-10-formyltetrahydrofolate = UDP-4-deoxy-4-formamido-beta-L-arabinose + (6S)-5,6,7,8-tetrahydrofolate + H(+). The protein operates within nucleotide-sugar biosynthesis; UDP-4-deoxy-4-formamido-beta-L-arabinose biosynthesis; UDP-4-deoxy-4-formamido-beta-L-arabinose from UDP-alpha-D-glucuronate: step 1/3. It functions in the pathway nucleotide-sugar biosynthesis; UDP-4-deoxy-4-formamido-beta-L-arabinose biosynthesis; UDP-4-deoxy-4-formamido-beta-L-arabinose from UDP-alpha-D-glucuronate: step 3/3. Its pathway is bacterial outer membrane biogenesis; lipopolysaccharide biosynthesis. Bifunctional enzyme that catalyzes the oxidative decarboxylation of UDP-glucuronic acid (UDP-GlcUA) to UDP-4-keto-arabinose (UDP-Ara4O) and the addition of a formyl group to UDP-4-amino-4-deoxy-L-arabinose (UDP-L-Ara4N) to form UDP-L-4-formamido-arabinose (UDP-L-Ara4FN). The modified arabinose is attached to lipid A and is required for resistance to polymyxin and cationic antimicrobial peptides. The polypeptide is Bifunctional polymyxin resistance protein ArnA (Shigella dysenteriae serotype 1 (strain Sd197)).